Consider the following 410-residue polypeptide: Arginine deiminase (410 aa).

The active-site Amidino-cysteine intermediate is the C400.

It belongs to the arginine deiminase family.

It is found in the cytoplasm. It carries out the reaction L-arginine + H2O = L-citrulline + NH4(+). It participates in amino-acid degradation; L-arginine degradation via ADI pathway; carbamoyl phosphate from L-arginine: step 1/2. This is Arginine deiminase from Streptococcus agalactiae serotype III (strain NEM316).